Reading from the N-terminus, the 1234-residue chain is 1-phosphatidylinositol 4,5-bisphosphate phosphodiesterase beta-3 (1234 aa).

N-acetylalanine is present on A2. Residues 315–466 (MDMTQPLSAY…LMGRILVKNK (152 aa)) form the PI-PLC X-box domain. Active-site residues include H330 and H377. The tract at residues 465–586 (NKKRHRPSTG…GTASSEVNAT (122 aa)) is disordered. S472, S488, S493, and S535 each carry phosphoserine. Over residues 486–513 (EQSNSALSESSAATEPSSPQLGSPSSDS) the composition is skewed to low complexity. The segment covering 554 to 566 (REDEEEDEEEEET) has biased composition (acidic residues). A compositionally biased stretch (polar residues) spans 577–586 (GTASSEVNAT). The PI-PLC Y-box domain maps to 589 to 705 (MSTLVNYVEP…GYLLKPEFMR (117 aa)). The region spanning 706–834 (RPDKSFDPFT…RNEANQPLCL (129 aa)) is the C2 domain. The span at 886 to 907 (ASTEMCQETPSQQQGSQLSSNP) shows a compositional bias: polar residues. The interval 886–936 (ASTEMCQETPSQQQGSQLSSNPVPNPLDDSPRWPPGPTTSPTSTSLSSPGQ) is disordered. Positions 924–934 (TSPTSTSLSSP) are enriched in low complexity. Phosphoserine occurs at positions 925 and 1105. A disordered region spans residues 1196 to 1234 (SEGLGDGPLVACASNGHAAGSGGHQSGADSESQEENTQL). An interaction with SHANK2 region spans residues 1231-1234 (NTQL).

Interacts with LPAR2. Interacts with SHANK2. Ca(2+) is required as a cofactor. In terms of tissue distribution, expressed in parotid gland, brain, liver, uterus, lung, heart, adrenal gland, and ovary. Not detected in spleen, pancreas, intestine, thymus or kidney.

The protein resides in the cytoplasm. The protein localises to the membrane. Its subcellular location is the nucleus. It catalyses the reaction a 1,2-diacyl-sn-glycero-3-phospho-(1D-myo-inositol-4,5-bisphosphate) + H2O = 1D-myo-inositol 1,4,5-trisphosphate + a 1,2-diacyl-sn-glycerol + H(+). It carries out the reaction a 1,2-diacyl-sn-glycero-3-phospho-(1D-myo-inositol) + H2O = 1D-myo-inositol 1-phosphate + a 1,2-diacyl-sn-glycerol + H(+). Its activity is regulated as follows. Activated by G(q)/G(11) G alpha proteins in response to ligand-binding to G protein-coupled receptors. Catalyzes the production of the second messenger molecules diacylglycerol (DAG) and inositol 1,4,5-trisphosphate (IP3). Key transducer of G protein-coupled receptor signaling: activated by G(q)/G(11) G alpha proteins downstream of G protein-coupled receptors activation. In neutrophils, participates in a phospholipase C-activating N-formyl peptide-activated GPCR (G protein-coupled receptor) signaling pathway by promoting RASGRP4 activation by DAG, to promote neutrophil functional responses. This chain is 1-phosphatidylinositol 4,5-bisphosphate phosphodiesterase beta-3, found in Rattus norvegicus (Rat).